The chain runs to 610 residues: Menin (610 aa).

Positions 214–390 are interaction with FANCD2; the sequence is GVAERSWLYL…SLLEAGEERP (177 aa). The interval 460-552 is disordered; it reads REAEAAEAEE…SPPPEGPVLT (93 aa). Basic and acidic residues predominate over residues 484-500; it reads RRESKPEEPPPPKKPAL. 2 positions are modified to phosphoserine: Ser-487 and Ser-543. Thr-594 carries the phosphothreonine modification.

As to quaternary structure, component of the MLL-HCF complex, at least composed of KMT2A/MLL1, MEN1, ASH2L, RBBP5, DPY30, WDR5, HCFC1 and HCFC2. Component of the menin-associated histone methyltransferase complex, at least composed of KMT2B/MLL4, MEN1, ASH2L, RBBP5, DPY30 and WDR5. Interacts with POLR2B. Interacts with POLR2A phosphorylated at 'Ser-5', but not with the unphosphorylated, nor 'Ser-2' phosphorylated POLR2A forms. Interacts with FANCD2 and DBF4. Interacts with JUND (via MBM motif); inhibits the interaction of JUND with MAPK10 and the phosphorylation of JUND by MAP kinases MAPK8 and MAPK10. Interacts with SMAD3, but not with SMAD2, nor SMAD4. Directly interacts with NFKB1, NFKB2 and RELA. Interacts with KMT2A (via MBM motif). The KMT2A-MEN1 complex interacts with PSIP1 with a greater affinity as MEN1 enhances interaction of KMT2A with PSIP1. Interacts with the fusion protein KMT2A-MLLT3. As to expression, ubiquitous.

Its subcellular location is the nucleus. In terms of biological role, essential component of a MLL/SET1 histone methyltransferase (HMT) complex, a complex that specifically methylates 'Lys-4' of histone H3 (H3K4). Functions as a transcriptional regulator. Binds to the TERT promoter and represses telomerase expression. Plays a role in TGFB1-mediated inhibition of cell-proliferation, possibly regulating SMAD3 transcriptional activity. Represses JUND-mediated transcriptional activation on AP1 sites, as well as that mediated by NFKB subunit RELA. Positively regulates HOXC8 and HOXC6 gene expression. May be involved in normal hematopoiesis through the activation of HOXA9 expression. May be involved in DNA repair. In Homo sapiens (Human), this protein is Menin (MEN1).